Reading from the N-terminus, the 388-residue chain is ATP phosphoribosyltransferase regulatory subunit (388 aa).

The protein belongs to the class-II aminoacyl-tRNA synthetase family. HisZ subfamily. In terms of assembly, heteromultimer composed of HisG and HisZ subunits.

The protein resides in the cytoplasm. It functions in the pathway amino-acid biosynthesis; L-histidine biosynthesis; L-histidine from 5-phospho-alpha-D-ribose 1-diphosphate: step 1/9. Its function is as follows. Required for the first step of histidine biosynthesis. May allow the feedback regulation of ATP phosphoribosyltransferase activity by histidine. The sequence is that of ATP phosphoribosyltransferase regulatory subunit from Acinetobacter baylyi (strain ATCC 33305 / BD413 / ADP1).